We begin with the raw amino-acid sequence, 94 residues long: Co-chaperonin GroES (94 aa).

It belongs to the GroES chaperonin family. In terms of assembly, heptamer of 7 subunits arranged in a ring. Interacts with the chaperonin GroEL.

Its subcellular location is the cytoplasm. Together with the chaperonin GroEL, plays an essential role in assisting protein folding. The GroEL-GroES system forms a nano-cage that allows encapsulation of the non-native substrate proteins and provides a physical environment optimized to promote and accelerate protein folding. GroES binds to the apical surface of the GroEL ring, thereby capping the opening of the GroEL channel. This chain is Co-chaperonin GroES, found in Parageobacillus thermoglucosidasius (Geobacillus thermoglucosidasius).